Consider the following 543-residue polypeptide: Protein P78/83 (543 aa).

3 disordered regions span residues 147-222, 235-325, and 373-400; these read QALP…QPAA, RNEK…SLSN, and MAKSSSEATSNDEGWDDDDNRPNKANTP. A compositionally biased stretch (pro residues) spans 182-221; it reads AAPPPPPSPVPNIPAPPPPPPPSMSELPPAPPMPTEPQPA. Residues 226-246 enclose the WH2 domain; the sequence is DRQQLLEAIRNEKNRTRLRPV. The span at 271–321 shows a compositional bias: pro residues; it reads PKPPSASPPPPPPPPPPPAPPAPPPMVDLSSAPPPPPLVDLPSEMLPPPAP. A compositionally biased stretch (polar residues) spans 375–384; it reads KSSSEATSND.

Forms a complex with proteins C42 and E27. Interacts with host actin-related protein 2/3 complex. Interacts with protein Ac102.

It localises to the host cytoplasm. It is found in the host nucleus. Plays a role in the transport of the nucleocapsids from the cytoplasm toward the host nucleus together with the host actin-polymerizing Arp2/3 complex. In Lepidoptera (butterflies and moths), this protein is Protein P78/83 (P61).